A 228-amino-acid chain; its full sequence is DNA mismatch repair protein MutH (228 aa).

This sequence belongs to the MutH family.

Its subcellular location is the cytoplasm. Functionally, sequence-specific endonuclease that cleaves unmethylated GATC sequences. It is involved in DNA mismatch repair. In Yersinia pseudotuberculosis serotype O:1b (strain IP 31758), this protein is DNA mismatch repair protein MutH.